We begin with the raw amino-acid sequence, 189 residues long: Glycerol-3-phosphate acyltransferase (189 aa).

The next 4 helical transmembrane spans lie at 1 to 21, 77 to 97, 111 to 131, and 151 to 171; these read MFWLLALLAYLLGSLSFAIVL, LQEQAWVGVCAVLGHLFPVYF, MLMGLYFPAALLAIAAWLLTF, and LLAWREPAALLPISVLTVMIV.

The protein belongs to the PlsY family. In terms of assembly, probably interacts with PlsX.

It is found in the cell inner membrane. The catalysed reaction is an acyl phosphate + sn-glycerol 3-phosphate = a 1-acyl-sn-glycero-3-phosphate + phosphate. Its pathway is lipid metabolism; phospholipid metabolism. Catalyzes the transfer of an acyl group from acyl-phosphate (acyl-PO(4)) to glycerol-3-phosphate (G3P) to form lysophosphatidic acid (LPA). This enzyme utilizes acyl-phosphate as fatty acyl donor, but not acyl-CoA or acyl-ACP. This Pseudomonas putida (strain W619) protein is Glycerol-3-phosphate acyltransferase.